The primary structure comprises 240 residues: Pyridoxine 5'-phosphate synthase (240 aa).

Asn7 is a binding site for 3-amino-2-oxopropyl phosphate. 9-10 (DH) contributes to the 1-deoxy-D-xylulose 5-phosphate binding site. Arg18 lines the 3-amino-2-oxopropyl phosphate pocket. His43 acts as the Proton acceptor in catalysis. 1-deoxy-D-xylulose 5-phosphate-binding residues include Arg45 and His50. Residue Glu70 is the Proton acceptor of the active site. Residue Thr100 coordinates 1-deoxy-D-xylulose 5-phosphate. His191 acts as the Proton donor in catalysis. 3-amino-2-oxopropyl phosphate is bound by residues Gly192 and 213–214 (GH).

Belongs to the PNP synthase family. In terms of assembly, homooctamer; tetramer of dimers.

The protein resides in the cytoplasm. The enzyme catalyses 3-amino-2-oxopropyl phosphate + 1-deoxy-D-xylulose 5-phosphate = pyridoxine 5'-phosphate + phosphate + 2 H2O + H(+). The protein operates within cofactor biosynthesis; pyridoxine 5'-phosphate biosynthesis; pyridoxine 5'-phosphate from D-erythrose 4-phosphate: step 5/5. Functionally, catalyzes the complicated ring closure reaction between the two acyclic compounds 1-deoxy-D-xylulose-5-phosphate (DXP) and 3-amino-2-oxopropyl phosphate (1-amino-acetone-3-phosphate or AAP) to form pyridoxine 5'-phosphate (PNP) and inorganic phosphate. The chain is Pyridoxine 5'-phosphate synthase from Cyanothece sp. (strain PCC 7425 / ATCC 29141).